Consider the following 382-residue polypeptide: Ubiquitin-like protease 4 (382 aa).

Positions 46–106 are disordered; that stretch reads GTHLDGSIGE…DNDEWTNQKR (61 aa). The span at 84–100 shows a compositional bias: acidic residues; that stretch reads DLVDEDEEEEDEEDNDE.

Belongs to the peptidase C48 family. In terms of tissue distribution, expressed in hermaphrodite-specific neurons, head muscles, body wall muscles and pharyngeal cells.

It localises to the cytoplasm. Its subcellular location is the cytoskeleton. The protein localises to the microtubule organizing center. The protein resides in the centrosome. It is found in the nucleus. It localises to the mitochondrion matrix. It participates in protein modification; protein sumoylation. Protease required for deconjugation of smo-1 conjugates from target proteins which is necessary for cell cycle progression. Required for respiration and the maintenance of normal mitochondrial homeostasis. In response to mitochondrial stress, required for the removal of smo-1 conjugates from the transcription factor dve-1, which promotes the translocation of dve-1 from the cytosol to the nucleus to initiate the mitochondrial unfolded protein response. Furthermore, removes the smo-1 conjugates from the transcription factor atfs-1 to promote its stability and activate the mitochondrial unfolded protein response. Also plays a role in promoting mitochondrial unfolded protein response-mediated innate immunity following infection with P.aeruginosa. The protein is Ubiquitin-like protease 4 of Caenorhabditis elegans.